The sequence spans 252 residues: Major prion protein (252 aa).

An N-terminal signal peptide occupies residues 1 to 22 (MANLGCWMLVLFVATWSDLGLC). Positions 23 to 38 (KKRPKPGGWNTGGSRY) are interaction with ADGRG6. The interval 23-229 (KKRPKPGGWN…ESQAYYQRGS (207 aa)) is interaction with GRB2, ERI3 and SYN1. The interval 26-106 (PKPGGWNTGG…QWNKPSKPKT (81 aa)) is disordered. Repeat copies occupy residues 51 to 58 (PQGGGWGQ), 59 to 66 (PHGGGWGQ), 67 to 74 (PHGGGWGQ), 75 to 82 (PHGGSWGQ), and 83 to 90 (PHGGGWGQ). The interval 51–90 (PQGGGWGQPHGGGWGQPHGGGWGQPHGGSWGQPHGGGWGQ) is 5 X 8 AA tandem repeats of P-H-G-G-G-W-G-Q. Positions 52-94 (QGGGWGQPHGGGWGQPHGGGWGQPHGGSWGQPHGGGWGQGGGT) are enriched in gly residues. Residues His-60, Gly-61, Gly-62, His-68, Gly-69, Gly-70, His-76, Gly-77, Gly-78, His-84, Gly-85, and Gly-86 each contribute to the Cu(2+) site. A disulfide bridge connects residues Cys-178 and Cys-213. 2 N-linked (GlcNAc...) asparagine glycosylation sites follow: Asn-180 and Asn-196. Ser-229 carries GPI-anchor amidated serine lipidation. Residues 230–252 (SMVLFSSPPVILLISFLIFLIVG) constitute a propeptide, removed in mature form.

It belongs to the prion family. As to quaternary structure, monomer and homodimer. Has a tendency to aggregate into amyloid fibrils containing a cross-beta spine, formed by a steric zipper of superposed beta-strands. Soluble oligomers may represent an intermediate stage on the path to fibril formation. Copper binding may promote oligomerization. Interacts with GRB2, APP, ERI3/PRNPIP and SYN1. Mislocalized cytosolically exposed PrP interacts with MGRN1; this interaction alters MGRN1 subcellular location and causes lysosomal enlargement. Interacts with APP. Interacts with KIAA1191. Interacts with ADGRG6.

The protein resides in the cell membrane. It localises to the golgi apparatus. Its primary physiological function is unclear. May play a role in neuronal development and synaptic plasticity. May be required for neuronal myelin sheath maintenance. May promote myelin homeostasis through acting as an agonist for ADGRG6 receptor. May play a role in iron uptake and iron homeostasis. Soluble oligomers are toxic to cultured neuroblastoma cells and induce apoptosis (in vitro). Association with GPC1 (via its heparan sulfate chains) targets PRNP to lipid rafts. Also provides Cu(2+) or Zn(2+) for the ascorbate-mediated GPC1 deaminase degradation of its heparan sulfate side chains. The chain is Major prion protein (PRNP) from Sapajus apella (Brown-capped capuchin).